The chain runs to 755 residues: MFKRVGLIAGIAGPVAGSSRFSAVSFSKRAFSASSKRCTYEEERAVLDEIQPLLSEKDIDASKKLRNIGISAHIDSGKTTFTERVLYYTGRIKAIHEVRGRDNVGAKMDSMDLEREKGITIQSAATYCSWDKDNESYHFNLIDTPGHIDFTIEVERALRILDGAVLVVCAVSGVQSQTVTVDRQMRRYNVPRVTFINKMDRMGANPFRSIEQINNKLRIPAAAIQVPIGAESELKGVVNIIDRVAIYNEGSNGEKLVTGPVPEDLKDLVEEKRALLIETLADVDDEIAEIFLEEKEPSVDEIKAAIRRATIARKFSPVLMGSALANTGIQNVLDAIVEYLPNPSEVLNTGLDIAKDETKVNLIPSSTQPFVGLAFKLEEGKYGQLTYIRVYQGKMRKGGYITNVKTGKKVKISRLVRMHSNDMEDVDEVGAGEICATFGIDCSSGDTFTDGTLKYSMSSMFVPDAVISLSITPKSKDSTNFSKALNRFQKEDPTFRVRFDPESKETVISGMGELHLEIYVERMRREYNVECVTGKPQVSYRESIQSSAEFDYTHKKQSGGAGQYGRVMGNLSHIENSNTNNFETAIVGGRIPDKYLAACAKGFEEACEKGPLIGHRVLGVNMLINDGAIHAVDSNELAFKTATMAAFRQAFLESQPVILEPIMNVSVTSPNEFQGNVIGLMNKLQAVIQDTENGQDEFTITAECPLNTMFGFATSLRASTQGKGEFSLEFKHYAPASPQLQKQLIADYQKKQQQK.

Residues 1–38 constitute a mitochondrion transit peptide; it reads MFKRVGLIAGIAGPVAGSSRFSAVSFSKRAFSASSKRC. One can recognise a tr-type G domain in the interval 63-344; sequence KKLRNIGISA…AIVEYLPNPS (282 aa). GTP is bound by residues 72-79, 143-147, and 197-200; these read AHIDSGKT, DTPGH, and NKMD.

It belongs to the TRAFAC class translation factor GTPase superfamily. Classic translation factor GTPase family. EF-G/EF-2 subfamily.

The protein localises to the mitochondrion. It functions in the pathway protein biosynthesis; polypeptide chain elongation. Its function is as follows. Mitochondrial GTPase that catalyzes the GTP-dependent ribosomal translocation step during translation elongation. During this step, the ribosome changes from the pre-translocational (PRE) to the post-translocational (POST) state as the newly formed A-site-bound peptidyl-tRNA and P-site-bound deacylated tRNA move to the P and E sites, respectively. Catalyzes the coordinated movement of the two tRNA molecules, the mRNA and conformational changes in the ribosome. The polypeptide is Elongation factor G, mitochondrial (Kluyveromyces lactis (strain ATCC 8585 / CBS 2359 / DSM 70799 / NBRC 1267 / NRRL Y-1140 / WM37) (Yeast)).